A 668-amino-acid polypeptide reads, in one-letter code: DNA ligase (668 aa).

NAD(+) is bound by residues 35–39, 84–85, and Glu115; these read DQEYD and SL. Lys117 acts as the N6-AMP-lysine intermediate in catalysis. NAD(+) is bound by residues Arg138, Glu172, Lys288, and Lys312. 4 residues coordinate Zn(2+): Cys406, Cys409, Cys425, and Cys430. A BRCT domain is found at 589–668; the sequence is KLEGPLKGLV…EEFFDKYGES (80 aa).

It belongs to the NAD-dependent DNA ligase family. LigA subfamily. It depends on Mg(2+) as a cofactor. Requires Mn(2+) as cofactor.

The catalysed reaction is NAD(+) + (deoxyribonucleotide)n-3'-hydroxyl + 5'-phospho-(deoxyribonucleotide)m = (deoxyribonucleotide)n+m + AMP + beta-nicotinamide D-nucleotide.. DNA ligase that catalyzes the formation of phosphodiester linkages between 5'-phosphoryl and 3'-hydroxyl groups in double-stranded DNA using NAD as a coenzyme and as the energy source for the reaction. It is essential for DNA replication and repair of damaged DNA. This chain is DNA ligase, found in Petrotoga mobilis (strain DSM 10674 / SJ95).